The sequence spans 154 residues: Ribonuclease 8 (154 aa).

A signal peptide spans 1–27; the sequence is MAPARAGCCPLLLLLLGLRVAQIPVSA. The active-site Proton acceptor is the H42. Cystine bridges form between C64–C118, C82–C133, and C89–C96. Residues 65 to 69 and K90 each bind substrate; that span reads KDLNT. Residue H149 is the Proton donor of the active site.

It belongs to the pancreatic ribonuclease family.

The protein resides in the secreted. Functionally, has a low ribonuclease activity. This Miopithecus talapoin (Angolan talapoin) protein is Ribonuclease 8 (RNASE8).